We begin with the raw amino-acid sequence, 473 residues long: Lactococcin A secretion protein LcnD-like (473 aa).

Topologically, residues 1–21 (MFDKKLLESSELYDKRYRNFS) are cytoplasmic. The chain crosses the membrane as a helical span at residues 22–44 (TLIILPLFILLVGGVIFTFFAHK). The Extracellular segment spans residues 45-473 (ELTVISTGSI…FLDKIMGRTS (429 aa)).

It belongs to the membrane fusion protein (MFP) (TC 8.A.1) family.

The protein resides in the cell membrane. Its function is as follows. Involved in the secretion of a lactococcin. The sequence is that of Lactococcin A secretion protein LcnD-like (lcnD) from Lactococcus lactis subsp. lactis (strain IL1403) (Streptococcus lactis).